We begin with the raw amino-acid sequence, 259 residues long: MDPPAEKPGEAGGLQITPQLLKSRTGEFSLESILLLKLRGLGLADLGCLGECLGLEWLDLSGNALTHLGPLASLRQLAVLNVSNNRLTGLEPLATCENLQSLNAAGNLLATPGQLQCLAGLPCLEYLRLRDPLARLSNPLCANPSYWAAVRELLPGLKVIDGERVIGRGSEFYQLCRDLDSSLRPSSSPGPRATEAQPWVEPGYWESWPSRSSSILEEACRQFQDTLQECWDLDRQASDSLAQAEQVLSSAGPTSSFVF.

LRR repeat units follow at residues Ser32–Leu53, Gly54–Arg75, Gln76–Glu97, and Asn98–Ala119. One can recognise an LRRCT domain in the interval Asn138–Asp178.

The polypeptide is Leucine-rich repeat-containing protein 61 (LRRC61) (Homo sapiens (Human)).